We begin with the raw amino-acid sequence, 309 residues long: NAD kinase (309 aa).

The active-site Proton acceptor is aspartate 89. NAD(+) contacts are provided by residues 89–90, 163–164, histidine 174, arginine 191, aspartate 193, and 204–209; these read DG, NE, and TAYALS.

Belongs to the NAD kinase family. It depends on a divalent metal cation as a cofactor.

The protein resides in the cytoplasm. The catalysed reaction is NAD(+) + ATP = ADP + NADP(+) + H(+). In terms of biological role, involved in the regulation of the intracellular balance of NAD and NADP, and is a key enzyme in the biosynthesis of NADP. Catalyzes specifically the phosphorylation on 2'-hydroxyl of the adenosine moiety of NAD to yield NADP. The protein is NAD kinase of Shewanella baltica (strain OS185).